Here is a 371-residue protein sequence, read N- to C-terminus: MSL complex subunit 3B (371 aa).

2 disordered regions span residues M1–A47 and E160–K230. The segment covering P8 to A47 has biased composition (basic and acidic residues). Positions D44–P367 constitute an MRG domain. The span at S183–A193 shows a compositional bias: low complexity. The segment covering A206 to H216 has biased composition (basic residues).

It is found in the nucleus. Probable non-catalytic component of the MSL histone acetyltransferase complex, a multiprotein complex that mediates the majority of histone H4 acetylation at 'Lys-16' (H4K16ac), an epigenetic mark that prevents chromatin compaction. The protein is MSL complex subunit 3B of Mus musculus (Mouse).